A 345-amino-acid polypeptide reads, in one-letter code: Low-density lipoprotein receptor class A domain-containing protein 3 (345 aa).

The signal sequence occupies residues Met1–Ser17. Over Gln18 to Thr173 the chain is Extracellular. Residue Asn24 is glycosylated (N-linked (GlcNAc...) asparagine). 3 consecutive LDL-receptor class A domains span residues Glu28–Pro65, Lys70–Thr107, and Leu112–Glu148. Disulfide bonds link Cys29-Cys42, Cys37-Cys55, Cys49-Cys64, Cys71-Cys84, Cys78-Cys97, Cys91-Cys106, Cys113-Cys125, Cys120-Cys138, and Cys132-Cys147. Residues Asn30–Asp57 are (Microbial infection) Interaction with Venezuelan equine encephalitis virus/VEEV spike proteins E1 and E2. A helical transmembrane segment spans residues Tyr174–Leu194. The Cytoplasmic portion of the chain corresponds to His195–Val345. 2 short sequence motifs (involved in ITCH interaction) span residues Pro256–Tyr259 and Pro275–Tyr278. Residues Trp270–Val345 are disordered. Positions Ser295–Ser313 are enriched in low complexity.

It belongs to the LDLR family. Interacts with APP precursor C-terminus. Interacts directly with ITCH; this interaction promotes ITCH auto-ubiquitination leading to its degradation. Interacts directly with NEDD4; this interaction promotes NEDD4 auto-ubiquitination. Interacts directly with NEDD4L. In terms of assembly, (Microbial infection) Interacts (via domain LDL-receptor class A 1) with Venezuelan equine encephalitis virus/VEEV spike proteins E1 and E2. In terms of tissue distribution, expressed at high levels in brain, lung, skeletal muscle, and pancreas. Expressed at moderate levels in heart, placenta, and kidney but not detected in the liver.

Its subcellular location is the cell membrane. In terms of biological role, may influence APP processing, resulting in a decrease in sAPP-alpha production and increased amyloidogenic P3 peptide production. May regulate ITCH and NEDD4 E3 ligase activity and degradation. Functionally, (Microbial infection) Acts as a receptor for Venezuelan equine encephalitis virus. The protein is Low-density lipoprotein receptor class A domain-containing protein 3 of Homo sapiens (Human).